Here is an 86-residue protein sequence, read N- to C-terminus: Stage V sporulation protein S (86 aa).

In terms of biological role, interferes with sporulation at an early stage. Seems to play a positive role in allowing cells to progress beyond stage V of sporulation. The sequence is that of Stage V sporulation protein S from Bacillus subtilis (strain 168).